The primary structure comprises 433 residues: Histidinol dehydrogenase (433 aa).

3 residues coordinate NAD(+): Y129, Q191, and N214. Residues S237, Q259, and H262 each contribute to the substrate site. Residues Q259 and H262 each contribute to the Zn(2+) site. Active-site proton acceptor residues include E326 and H327. The substrate site is built by H327, D360, E414, and H419. D360 contacts Zn(2+). H419 contributes to the Zn(2+) binding site.

Belongs to the histidinol dehydrogenase family. Zn(2+) is required as a cofactor.

The catalysed reaction is L-histidinol + 2 NAD(+) + H2O = L-histidine + 2 NADH + 3 H(+). It functions in the pathway amino-acid biosynthesis; L-histidine biosynthesis; L-histidine from 5-phospho-alpha-D-ribose 1-diphosphate: step 9/9. In terms of biological role, catalyzes the sequential NAD-dependent oxidations of L-histidinol to L-histidinaldehyde and then to L-histidine. This is Histidinol dehydrogenase from Methanosarcina mazei (strain ATCC BAA-159 / DSM 3647 / Goe1 / Go1 / JCM 11833 / OCM 88) (Methanosarcina frisia).